We begin with the raw amino-acid sequence, 346 residues long: MTEHIQFSPEKDALVLLDQRYLPTREDWFDCKTTDDIVEALVVMVVRGAPAIGVTAAYGCYLAGREVAGSADWKAELEKNLDKIENARPTAVNLRWAVREMKRIWAEAGDVSLDELCAIWLKRAKEIHVDDIRMCEDIGKFGGELMDDGDTIMTHCNAGALATAGYGTALGVVRGAVDQGKKVSVIANETRPFLQGARLTAYELHRDGIPVKVACDNACALLMKKGLVQKVVVGADRVTANGDAVNKIGTYGVALLAREFGIPFYVAAPVYTIDPETPTGDDVPIEDRTPTEVTHVGDHRITPEGVEVFNFAFDPTPNELIAGIITEKGVLRPPYTEAIKKLFEDN.

Residues 47–49 (RGA), arginine 88, and glutamine 195 contribute to the substrate site. Residue aspartate 236 is the Proton donor of the active site. Substrate is bound at residue 246 to 247 (NK).

The protein belongs to the eIF-2B alpha/beta/delta subunits family. MtnA subfamily.

The catalysed reaction is 5-(methylsulfanyl)-alpha-D-ribose 1-phosphate = 5-(methylsulfanyl)-D-ribulose 1-phosphate. The protein operates within amino-acid biosynthesis; L-methionine biosynthesis via salvage pathway; L-methionine from S-methyl-5-thio-alpha-D-ribose 1-phosphate: step 1/6. In terms of biological role, catalyzes the interconversion of methylthioribose-1-phosphate (MTR-1-P) into methylthioribulose-1-phosphate (MTRu-1-P). This is Methylthioribose-1-phosphate isomerase from Maridesulfovibrio salexigens (strain ATCC 14822 / DSM 2638 / NCIMB 8403 / VKM B-1763) (Desulfovibrio salexigens).